A 211-amino-acid chain; its full sequence is Ferric nitrobindin-like protein (211 aa).

Residues 21 to 27 (GRWRGPG) carry the GXWXGXG motif. Residues 104–130 (GVVQEGSDTRTEPGGAEPDPAGRRAPS) form a disordered region.

It belongs to the nitrobindin family.

The polypeptide is Ferric nitrobindin-like protein (Beutenbergia cavernae (strain ATCC BAA-8 / DSM 12333 / CCUG 43141 / JCM 11478 / NBRC 16432 / NCIMB 13614 / HKI 0122)).